The following is a 388-amino-acid chain: GTPase Obg (388 aa).

The Obg domain maps to 1–159; it reads MKFVDEAVIK…RELRLELLLL (159 aa). Positions 160 to 333 constitute an OBG-type G domain; the sequence is ADVGMLGLPN…LCYKLADFME (174 aa). Residues 166–173, 191–195, 213–216, 283–286, and 314–316 each bind GTP; these read GLPNAGKS, FTTLI, DIPG, NKVD, and SAV. S173 and T193 together coordinate Mg(2+). Residues 359-380 form a disordered region; the sequence is NQGEVITEDDDDWDDWDDEEDD. Over residues 364–380 the composition is skewed to acidic residues; the sequence is ITEDDDDWDDWDDEEDD.

Belongs to the TRAFAC class OBG-HflX-like GTPase superfamily. OBG GTPase family. Monomer. Mg(2+) serves as cofactor.

It localises to the cytoplasm. An essential GTPase which binds GTP, GDP and possibly (p)ppGpp with moderate affinity, with high nucleotide exchange rates and a fairly low GTP hydrolysis rate. Plays a role in control of the cell cycle, stress response, ribosome biogenesis and in those bacteria that undergo differentiation, in morphogenesis control. The polypeptide is GTPase Obg (Vibrio vulnificus (strain YJ016)).